We begin with the raw amino-acid sequence, 145 residues long: MVKSVADRFFLGLDFGSTRIGVARNCGSLAVPVGVLPRASCAEILGYISRYSIDEVVIGLPLTLAGKEKQSARLAKEFSRFLVSSGVQVRFFDERFTTVIATQKFYSLGKGVKQIRKCVDAAAATVMLQLFLDMEVKVDPLERKP.

Belongs to the YqgF nuclease family.

It localises to the cytoplasm. Its function is as follows. Could be a nuclease involved in processing of the 5'-end of pre-16S rRNA. This is Putative pre-16S rRNA nuclease from Tropheryma whipplei (strain Twist) (Whipple's bacillus).